The sequence spans 404 residues: Alanyl-tRNA editing protein AlaX-L (404 aa).

Residues H104, H108, C202, and H206 each coordinate Zn(2+).

This sequence belongs to the class-II aminoacyl-tRNA synthetase family. Editing domain AlaX-L subfamily. Zn(2+) serves as cofactor.

It is found in the cytoplasm. In terms of biological role, functions in trans to edit the amino acid moiety from mischarged charged tRNA(Ala). This Pyrococcus horikoshii (strain ATCC 700860 / DSM 12428 / JCM 9974 / NBRC 100139 / OT-3) protein is Alanyl-tRNA editing protein AlaX-L (alaXL).